The following is a 144-amino-acid chain: EF-hand calcium-binding domain-containing protein 8 (144 aa).

2 consecutive EF-hand domains span residues 52–86 (IHLAKIEKMFEEDINSTGALGMDAFIKAMKKVLSS) and 87–122 (VSDEMLKELFLKVDSDCEGFVTWQKYVDYMMREFQG).

The sequence is that of EF-hand calcium-binding domain-containing protein 8 (EFCAB8) from Homo sapiens (Human).